A 369-amino-acid chain; its full sequence is Probable N-acetyltransferase 16 (369 aa).

Positions 1 to 49 (MKLEASCGTATSEVPKPEKKTARDAEPSSETRPQEVEAEPRSGSGPEAE) are disordered. Residues 15–26 (PKPEKKTARDAE) show a composition bias toward basic and acidic residues. An N-acetyltransferase domain is found at 53–188 (LDFVVATERE…QGILLVRFNA (136 aa)).

In terms of biological role, probable N-acetyltransferase. Shows only trace activity toward L-His and no N-acetyltransferase activity toward other amino acids. The physiological substrate of this enzyme is unknown. This chain is Probable N-acetyltransferase 16 (NAT16), found in Homo sapiens (Human).